The sequence spans 131 residues: Small ribosomal subunit protein eS8 (131 aa).

The interval 1-37 (MKLGAFYKGGDLKKPSGGKKRRVRRTKKKALGGGPPQ) is disordered. Residues 16–30 (SGGKKRRVRRTKKKA) are compositionally biased toward basic residues.

The protein belongs to the eukaryotic ribosomal protein eS8 family. Part of the 30S ribosomal subunit.

This is Small ribosomal subunit protein eS8 from Pyrobaculum neutrophilum (strain DSM 2338 / JCM 9278 / NBRC 100436 / V24Sta) (Thermoproteus neutrophilus).